Consider the following 357-residue polypeptide: Adenosine deaminase (357 aa).

Residues H16 and H18 each contribute to the Zn(2+) site. H18, D20, and G185 together coordinate substrate. A Zn(2+)-binding site is contributed by H212. E215 (proton donor) is an active-site residue. A Zn(2+)-binding site is contributed by D294. Residue D295 participates in substrate binding.

This sequence belongs to the metallo-dependent hydrolases superfamily. Adenosine and AMP deaminases family. Zn(2+) is required as a cofactor.

Its subcellular location is the cell membrane. It is found in the cell junction. It localises to the cytoplasmic vesicle lumen. The protein localises to the cytoplasm. The protein resides in the lysosome. It carries out the reaction adenosine + H2O + H(+) = inosine + NH4(+). The catalysed reaction is 2'-deoxyadenosine + H2O + H(+) = 2'-deoxyinosine + NH4(+). In terms of biological role, catalyzes the hydrolytic deamination of adenosine and 2-deoxyadenosine. Plays an important role in purine metabolism and in adenosine homeostasis. Modulates signaling by extracellular adenosine, and so contributes indirectly to cellular signaling events. May act as a positive regulator of T-cell coactivation. The chain is Adenosine deaminase (ADA) from Gallus gallus (Chicken).